The following is a 381-amino-acid chain: Deoxyguanosinetriphosphate triphosphohydrolase-like protein (381 aa).

An HD domain is found at 76 to 203 (RMTHTLEVAG…ADLSDEIAYT (128 aa)).

This sequence belongs to the dGTPase family. Type 2 subfamily.

This chain is Deoxyguanosinetriphosphate triphosphohydrolase-like protein, found in Leptospira borgpetersenii serovar Hardjo-bovis (strain JB197).